Here is a 332-residue protein sequence, read N- to C-terminus: Ubiquinol oxidase 1a, mitochondrial (332 aa).

Residues 1–54 constitute a mitochondrion transit peptide; it reads MSSRMAGSAILRHVGGVRLFTASATSPAAAAAAAARPFLAGGEAVPGVWGLRLM. A helical transmembrane segment spans residues 157–177; it reads AMMLETVAAVPGMVGGMLLHL. Positions 161, 200, and 203 each coordinate Fe cation. Residues 219-239 form a helical membrane-spanning segment; it reads ALVITVQGVFFNAYFLGYLLS. Positions 251, 302, and 305 each coordinate Fe cation.

The protein belongs to the alternative oxidase family. In terms of assembly, homodimer; disulfide-linked. It depends on Fe cation as a cofactor. As to expression, expressed in roots, leaf sheaths and leaf blades.

The protein resides in the mitochondrion inner membrane. The enzyme catalyses 2 a ubiquinol + O2 = 2 a ubiquinone + 2 H2O. Its function is as follows. Catalyzes the cyanide-resistant oxidation of ubiquinol and the reduction of molecular oxygen to water, but does not translocate protons and consequently is not linked to oxidative phosphorylation. May increase respiration when the cytochrome respiratory pathway is restricted, or in response to low temperatures. This Oryza sativa subsp. japonica (Rice) protein is Ubiquinol oxidase 1a, mitochondrial.